Here is a 63-residue protein sequence, read N- to C-terminus: Large ribosomal subunit protein uL29 (63 aa).

Belongs to the universal ribosomal protein uL29 family.

This Erwinia tasmaniensis (strain DSM 17950 / CFBP 7177 / CIP 109463 / NCPPB 4357 / Et1/99) protein is Large ribosomal subunit protein uL29.